We begin with the raw amino-acid sequence, 689 residues long: Beta-adrenergic receptor kinase 1 (689 aa).

The interval 1–190 (MADLEAVLAD…ELNIHLTMND (190 aa)) is N-terminal. The 122-residue stretch at 54–175 (TFEKIFSQKL…IESDKFTRFC (122 aa)) folds into the RGS domain. Residues 191–453 (FSVHRIIGRG…AQEVKESPFF (263 aa)) form the Protein kinase domain. ATP-binding positions include 197–205 (IGRGGFGEV) and lysine 220. The active-site Proton acceptor is aspartate 317. An AGC-kinase C-terminal domain is found at 454-521 (RSLDWQMVFL…TISERWQQEV (68 aa)). The PH domain occupies 558–652 (DCIMHGYMSK…WKKELRDAYR (95 aa)). A Phosphoserine modification is found at serine 670.

It belongs to the protein kinase superfamily. AGC Ser/Thr protein kinase family. GPRK subfamily. In terms of assembly, interacts with the heterodimer formed by GNB1 and GNG2. Interacts with GIT1. Interacts with, and phosphorylates chemokine-stimulated CCR5. Interacts with ARRB1. Interacts with LPAR1 and LPAR2. Interacts with RALA in response to LPAR1 activation. ADRBK1 and RALA mutually inhibit each other's binding to LPAR1. Interacts with ADRB2. Expressed in peripheral blood leukocytes.

It is found in the cytoplasm. Its subcellular location is the cell membrane. The protein resides in the postsynapse. The protein localises to the presynapse. It carries out the reaction [beta-adrenergic receptor] + ATP = [beta-adrenergic receptor]-phosphate + ADP + H(+). With respect to regulation, in contrast to other AGC family kinases, the catalytic activity is solely regulated by the binding of substrates and ligands, not by phosphorylation of the kinase domain. Specifically phosphorylates the agonist-occupied form of the beta-adrenergic and closely related receptors, probably inducing a desensitization of them. Key regulator of LPAR1 signaling. Competes with RALA for binding to LPAR1 thus affecting the signaling properties of the receptor. Desensitizes LPAR1 and LPAR2 in a phosphorylation-independent manner. Positively regulates ciliary smoothened (SMO)-dependent Hedgehog (Hh) signaling pathway by facilitating the trafficking of SMO into the cilium and the stimulation of SMO activity. Inhibits relaxation of airway smooth muscle in response to blue light. This chain is Beta-adrenergic receptor kinase 1, found in Homo sapiens (Human).